The chain runs to 429 residues: 3-isopropylmalate dehydratase large subunit (429 aa).

Residues Cys-303, Cys-363, and Cys-366 each coordinate [4Fe-4S] cluster.

Belongs to the aconitase/IPM isomerase family. LeuC type 2 subfamily. As to quaternary structure, heterodimer of LeuC and LeuD. Requires [4Fe-4S] cluster as cofactor.

The catalysed reaction is (2R,3S)-3-isopropylmalate = (2S)-2-isopropylmalate. Its pathway is amino-acid biosynthesis; L-leucine biosynthesis; L-leucine from 3-methyl-2-oxobutanoate: step 2/4. Functionally, catalyzes the isomerization between 2-isopropylmalate and 3-isopropylmalate, via the formation of 2-isopropylmaleate. The protein is 3-isopropylmalate dehydratase large subunit of Caldicellulosiruptor saccharolyticus (strain ATCC 43494 / DSM 8903 / Tp8T 6331).